The following is a 250-amino-acid chain: GTP cyclohydrolase 1 type 2 homolog (250 aa).

Residues His63, His64, Asp100, His218, and Glu222 each contribute to the a divalent metal cation site.

This sequence belongs to the GTP cyclohydrolase I type 2/NIF3 family. As to quaternary structure, homohexamer.

The protein is GTP cyclohydrolase 1 type 2 homolog of Pyrococcus abyssi (strain GE5 / Orsay).